A 712-amino-acid chain; its full sequence is Polyribonucleotide nucleotidyltransferase (712 aa).

Residues Asp-493 and Asp-499 each coordinate Mg(2+). Residues 560–619 (PRLLTFKVDPEDIGKIIGPGGKTVRGITEATGAKVDISDDGTITVSSSVGGQAEAARAMI) form the KH domain. Positions 629–697 (GQVYLGKVTR…HKGRINLTRL (69 aa)) constitute an S1 motif domain.

This sequence belongs to the polyribonucleotide nucleotidyltransferase family. Mg(2+) is required as a cofactor.

The protein localises to the cytoplasm. The enzyme catalyses RNA(n+1) + phosphate = RNA(n) + a ribonucleoside 5'-diphosphate. In terms of biological role, involved in mRNA degradation. Catalyzes the phosphorolysis of single-stranded polyribonucleotides processively in the 3'- to 5'-direction. The polypeptide is Polyribonucleotide nucleotidyltransferase (Synechococcus sp. (strain JA-2-3B'a(2-13)) (Cyanobacteria bacterium Yellowstone B-Prime)).